The sequence spans 702 residues: Neurochondrin (702 aa).

Belongs to the neurochondrin family.

It localises to the cytoplasm. The protein resides in the cytosol. Its subcellular location is the cell projection. The protein localises to the dendrite. It is found in the postsynapse. In terms of biological role, probably involved in signal transduction, in the nervous system. Required for the spatial learning process. May also be involved in neurite outgrowth. This Gallus gallus (Chicken) protein is Neurochondrin (NCDN).